The primary structure comprises 332 residues: Gibberellin 2-beta-dioxygenase (332 aa).

The 106-residue stretch at 175–280 (KSDSCFRLNH…RLSMIYFGGP (106 aa)) folds into the Fe2OG dioxygenase domain. Fe cation is bound by residues His-204, Asp-206, and His-261. Residue Arg-271 is part of the active site.

Belongs to the iron/ascorbate-dependent oxidoreductase family. GA2OX subfamily. Fe cation is required as a cofactor.

It catalyses the reaction gibberellin A1 + 2-oxoglutarate + O2 = gibberellin A8 + succinate + CO2. It participates in plant hormone biosynthesis; gibberellin biosynthesis. Functionally, catalyzes the 2-beta-hydroxylation of several biologically active gibberellins, leading to the homeostatic regulation of their endogenous level. Catabolism of gibberellins (GAs) plays a central role in plant development. Converts GA9/GA20 to GA51/GA29 and GA4/GA1 to GA34/GA8. In Phaseolus coccineus (Scarlet runner bean), this protein is Gibberellin 2-beta-dioxygenase (GA2OX1).